A 41-amino-acid chain; its full sequence is Cytochrome b559 subunit beta (41 aa).

The helical transmembrane segment at 16-32 (WLAIHALAVPTVFFLGS) threads the bilayer. A heme-binding site is contributed by His-20.

It belongs to the PsbE/PsbF family. In terms of assembly, heterodimer of an alpha subunit and a beta subunit. PSII is composed of 1 copy each of membrane proteins PsbA, PsbB, PsbC, PsbD, PsbE, PsbF, PsbH, PsbI, PsbJ, PsbK, PsbL, PsbM, PsbT, PsbX, PsbY, PsbZ, Psb30/Ycf12, at least 3 peripheral proteins of the oxygen-evolving complex and a large number of cofactors. It forms dimeric complexes. The cofactor is heme b.

The protein localises to the plastid. It is found in the chloroplast thylakoid membrane. Its function is as follows. This b-type cytochrome is tightly associated with the reaction center of photosystem II (PSII). PSII is a light-driven water:plastoquinone oxidoreductase that uses light energy to abstract electrons from H(2)O, generating O(2) and a proton gradient subsequently used for ATP formation. It consists of a core antenna complex that captures photons, and an electron transfer chain that converts photonic excitation into a charge separation. In Oltmannsiellopsis viridis (Marine flagellate), this protein is Cytochrome b559 subunit beta.